The chain runs to 183 residues: Putative 3-methyladenine DNA glycosylase (183 aa).

Belongs to the DNA glycosylase MPG family.

This Rickettsia conorii (strain ATCC VR-613 / Malish 7) protein is Putative 3-methyladenine DNA glycosylase.